The sequence spans 140 residues: Ubiquitin-like protein ATG12 (140 aa).

The disordered stretch occupies residues 1 to 50; the sequence is MAEEPQSVLQLPTSIAAGGEGLTDVSPETTTPEPPSSAAVSPGTEEPAGD. Positions 25–42 are enriched in low complexity; the sequence is VSPETTTPEPPSSAAVSP. Residue Gly140 forms a Glycyl lysine isopeptide (Gly-Lys) (interchain with K-130 in ATG5) linkage.

This sequence belongs to the ATG12 family. As to quaternary structure, forms a conjugate with ATG5. Part of the minor complex composed of 4 sets of ATG12-ATG5 and ATG16L1 (400 kDa); this complex interacts with ATG3 leading to disruption of ATG7 interaction and promotion of ATG8-like proteins lipidation. Forms an 800-kDa complex composed of ATG12-ATG5 and ATG16L2. Interacts with DHX58/RIG-1, IFIH1/MDA5 and MAVS/IPS-1 in monomeric form as well as in ATG12-ATG5 conjugate. The interaction with MAVS is further enhanced upon vesicular stomatitis virus (VSV) infection. Interacts with ATG3; this interaction is essential for phosphatidylethanolamine (PE)-conjugated ATG8-like proteins formation. Interacts with ATG7. Interacts with ATG10. The ATG12-ATG5 conjugate interacts with RAB33A; this interaction is bridged by ATG16L1 and promotes ATG12-ATG5-ATG16L1 complex recruitment to phagophores. Interacts with TECPR1. Interacts with SH3BGRL. The ATG12-ATG5 conjugate interacts with PDCD6IP (via the BRO1 domain); this interaction is bridged by ATG12 and promotes multiple PDCD6IP-mediated functions such as endolysosomal trafficking, macroautophagy and exosome biogenesis. In terms of processing, acetylated by EP300. Ubiquitous.

The protein localises to the cytoplasm. It localises to the preautophagosomal structure membrane. Functionally, ubiquitin-like protein involved in autophagy vesicles formation. Conjugation with ATG5 through a ubiquitin-like conjugating system involving also ATG7 as an E1-like activating enzyme and ATG10 as an E2-like conjugating enzyme, is essential for its function. The ATG12-ATG5 conjugate acts as an E3-like enzyme which is required for lipidation of ATG8 family proteins and their association to the vesicle membranes. As part of the ATG8 conjugation system with ATG5 and ATG16L1, required for recruitment of LRRK2 to stressed lysosomes and induction of LRRK2 kinase activity in response to lysosomal stress. Its function is as follows. (Microbial infection) May act as a proviral factor. In association with ATG5, negatively regulates the innate antiviral immune response by impairing the type I IFN production pathway upon vesicular stomatitis virus (VSV) infection. Required for the translation of incoming hepatitis C virus (HCV) RNA and, thereby, for the initiation of HCV replication, but not required once infection is established. This is Ubiquitin-like protein ATG12 from Homo sapiens (Human).